Here is a 284-residue protein sequence, read N- to C-terminus: Type II methyltransferase M1.LlaDCHI (284 aa).

Residues Trp-17, Lys-21, Asp-62, and Asp-194 each coordinate S-adenosyl-L-methionine.

Belongs to the N(4)/N(6)-methyltransferase family.

The enzyme catalyses a 2'-deoxyadenosine in DNA + S-adenosyl-L-methionine = an N(6)-methyl-2'-deoxyadenosine in DNA + S-adenosyl-L-homocysteine + H(+). In terms of biological role, an alpha subtype methylase, recognizes the double-stranded sequence 5'-GATC-3', methylates A-2 on both strands, and protects the DNA from cleavage by the LlaDCHI endonuclease. This is Type II methyltransferase M1.LlaDCHI from Lactococcus lactis subsp. cremoris (Streptococcus cremoris).